Consider the following 278-residue polypeptide: S-formylglutathione hydrolase YeiG (278 aa).

Active-site charge relay system residues include Ser-145, Asp-223, and His-256.

The protein belongs to the esterase D family.

It catalyses the reaction S-formylglutathione + H2O = formate + glutathione + H(+). Functionally, serine hydrolase involved in the detoxification of formaldehyde. Hydrolyzes S-formylglutathione to glutathione and formate. In Escherichia coli O157:H7, this protein is S-formylglutathione hydrolase YeiG (yeiG).